The sequence spans 185 residues: Disulfide bond formation protein B (185 aa).

At Met1–Ser25 the chain is on the cytoplasmic side. Residues Trp26–Tyr42 traverse the membrane as a helical segment. Over Phe43 to Leu60 the chain is Periplasmic. The cysteines at positions 52 and 55 are disulfide-linked. A helical membrane pass occupies residues Ala61–Pro76. At Asn77 to Leu83 the chain is on the cytoplasmic side. A helical transmembrane segment spans residues Ser84–Ile101. Over Lys102–Gln156 the chain is Periplasmic. A disulfide bridge links Cys116 with Cys142. Residues Trp157–Ser175 traverse the membrane as a helical segment. At Ala176 to Phe185 the chain is on the cytoplasmic side.

Belongs to the DsbB family.

The protein localises to the cell inner membrane. Required for disulfide bond formation in some periplasmic proteins. Acts by oxidizing the DsbA protein. This chain is Disulfide bond formation protein B, found in Psychromonas ingrahamii (strain DSM 17664 / CCUG 51855 / 37).